A 155-amino-acid polypeptide reads, in one-letter code: SsrA-binding protein (155 aa).

It belongs to the SmpB family.

It is found in the cytoplasm. Functionally, required for rescue of stalled ribosomes mediated by trans-translation. Binds to transfer-messenger RNA (tmRNA), required for stable association of tmRNA with ribosomes. tmRNA and SmpB together mimic tRNA shape, replacing the anticodon stem-loop with SmpB. tmRNA is encoded by the ssrA gene; the 2 termini fold to resemble tRNA(Ala) and it encodes a 'tag peptide', a short internal open reading frame. During trans-translation Ala-aminoacylated tmRNA acts like a tRNA, entering the A-site of stalled ribosomes, displacing the stalled mRNA. The ribosome then switches to translate the ORF on the tmRNA; the nascent peptide is terminated with the 'tag peptide' encoded by the tmRNA and targeted for degradation. The ribosome is freed to recommence translation, which seems to be the essential function of trans-translation. The protein is SsrA-binding protein of Streptococcus uberis (strain ATCC BAA-854 / 0140J).